The sequence spans 445 residues: Hydroxymethylglutaryl-CoA synthase (445 aa).

Asp31 provides a ligand contact to (3S)-3-hydroxy-3-methylglutaryl-CoA. Glu83 (proton donor/acceptor) is an active-site residue. Residues Cys120, Thr163, Ser211, His244, Lys253, Asn328, and Ser364 each contribute to the (3S)-3-hydroxy-3-methylglutaryl-CoA site. The active-site Acyl-thioester intermediate is the Cys120. The active-site Proton donor/acceptor is His244.

The protein belongs to the thiolase-like superfamily. HMG-CoA synthase family.

It carries out the reaction acetoacetyl-CoA + acetyl-CoA + H2O = (3S)-3-hydroxy-3-methylglutaryl-CoA + CoA + H(+). The protein operates within metabolic intermediate biosynthesis; (R)-mevalonate biosynthesis; (R)-mevalonate from acetyl-CoA: step 2/3. With respect to regulation, in contrast to bacterial and eukaryotic HMG-CoA synthases, is insensitive to feedback substrate inhibition by acetoacetyl-CoA. Enzymatic activity is inhibited by hymeglusin, which also blocks the propagation of H.volcanii cells in vivo, indicating the critical role that the mevalonate pathway plays in isoprenoid biosynthesis by these archaea. In terms of biological role, catalyzes the condensation of acetyl-CoA with acetoacetyl-CoA to form 3-hydroxy-3-methylglutaryl-CoA (HMG-CoA). Functions in the mevalonate (MVA) pathway leading to isopentenyl diphosphate (IPP), a key precursor for the biosynthesis of isoprenoid compounds such as archaeal membrane lipids. This chain is Hydroxymethylglutaryl-CoA synthase (hmgB), found in Haloferax volcanii (strain ATCC 29605 / DSM 3757 / JCM 8879 / NBRC 14742 / NCIMB 2012 / VKM B-1768 / DS2) (Halobacterium volcanii).